The sequence spans 369 residues: UPF0284 protein cce_1085 (369 aa).

The protein belongs to the UPF0284 family.

The polypeptide is UPF0284 protein cce_1085 (Crocosphaera subtropica (strain ATCC 51142 / BH68) (Cyanothece sp. (strain ATCC 51142))).